Here is a 249-residue protein sequence, read N- to C-terminus: Probable phosphatase Shal_1519 (249 aa).

Zn(2+)-binding residues include His8, His10, His16, His41, Glu74, His102, His132, Asp193, and His195.

This sequence belongs to the PHP family. Zn(2+) serves as cofactor.

In Shewanella halifaxensis (strain HAW-EB4), this protein is Probable phosphatase Shal_1519.